The primary structure comprises 209 residues: Max dimerization protein 4 (209 aa).

An interaction with SIN3A and SIN3B region spans residues 6 to 23; sequence LLILLEAAEYLERRDREA. The 53-residue stretch at 53–105 folds into the bHLH domain; it reads NNRSSHNELEKHRRAKLRLYLEQLKQLVPLGPDSTRHTTLSLLKRAKVHIKKL. The segment at 140-209 is disordered; sequence RVRTDSTGSA…CRRLGRPALS (70 aa). The span at 153–163 shows a compositional bias: acidic residues; it reads DDSEQEVDIEG. Positions 199-209 are enriched in basic residues; that stretch reads HCRRLGRPALS.

As to quaternary structure, efficient DNA binding requires dimerization with another bHLH protein. Binds DNA as a heterodimer with MAX. Interacts with SIN3A AND SIN3B. Interacts with RNF17.

It is found in the nucleus. Functionally, transcriptional repressor. Binds with MAX to form a sequence-specific DNA-binding protein complex which recognizes the core sequence 5'-CAC[GA]TG-3'. Antagonizes MYC transcriptional activity by competing for MAX and suppresses MYC dependent cell transformation. This is Max dimerization protein 4 (MXD4) from Homo sapiens (Human).